An 811-amino-acid polypeptide reads, in one-letter code: TLR4 interactor with leucine rich repeats (811 aa).

A signal peptide spans Met-1–Pro-25. The 32-residue stretch at Val-26–Ser-57 folds into the LRRNT domain. The Extracellular portion of the chain corresponds to Val-26–Gln-696. LRR repeat units follow at residues Val-61–Arg-81, Gln-84–Lys-105, Arg-108–Pro-129, Lys-132–Gly-153, Ser-156–Pro-177, Asn-180–Gln-201, Lys-204–Ala-223, Ser-230–His-251, Arg-254–Gly-275, Ala-278–Pro-299, Ser-302–His-323, and Arg-326–Ala-347. N-linked (GlcNAc...) asparagine glycosylation occurs at Asn-73. The N-linked (GlcNAc...) asparagine glycan is linked to Asn-209. The 58-residue stretch at Asn-359–Asp-416 folds into the LRRCT domain. Positions Leu-484 to Arg-549 are disordered. 2 stretches are compositionally biased toward low complexity: residues Gln-492–Ser-508 and Pro-530–Gly-544. N-linked (GlcNAc...) asparagine glycosylation is present at Asn-589. A helical transmembrane segment spans residues Leu-697 to Trp-717. Over Ala-718–Asp-811 the chain is Cytoplasmic. Ser-798 is modified (phosphoserine).

As to quaternary structure, belongs to the lipopolysaccharide (LPS) receptor, a multi-protein complex containing at least CD14, MD-2 and TLR4. Interacts with TLR4; this interaction is greatly enhanced by LPS stimulation. Interacts with LPS. In terms of processing, N-glycolysaled. As to expression, highly expressed in the brain, ovary, small intestine and spleen.

Its subcellular location is the membrane. Its function is as follows. Component of the TLR4 signaling complex. Mediates the innate immune response to bacterial lipopolysaccharide (LPS) leading to cytokine secretion. This Homo sapiens (Human) protein is TLR4 interactor with leucine rich repeats (TRIL).